Here is a 716-residue protein sequence, read N- to C-terminus: Inhibitor of nuclear factor kappa-B kinase subunit epsilon (716 aa).

Residues 9–315 (WHTDDLLGQG…LQRVVVHVFS (307 aa)) enclose the Protein kinase domain. An ATP-binding site is contributed by 15-23 (LGQGATASV). A Glycyl lysine isopeptide (Lys-Gly) (interchain with G-Cter in ubiquitin) cross-link involves residue Lys30. An ATP-binding site is contributed by Lys38. Asp135 acts as the Proton acceptor in catalysis. Position 172 is a phosphoserine; by autocatalysis and IKKB (Ser172). Lys231 is covalently cross-linked (Glycyl lysine isopeptide (Lys-Gly) (interchain with G-Cter in SUMO1)). An interaction with DDX3X region spans residues 383–647 (STAIPKGLAF…VQESLSKLLE (265 aa)). Lys401 participates in a covalent cross-link: Glycyl lysine isopeptide (Lys-Gly) (interchain with G-Cter in ubiquitin). Residues 436–457 (QELMFRGLHWVMEVLQATCRRT) form a leucine-zipper region. Thr501 is modified (phosphothreonine). The residue at position 664 (Ser664) is a Phosphoserine.

It belongs to the protein kinase superfamily. Ser/Thr protein kinase family. I-kappa-B kinase subfamily. As to quaternary structure, homodimer. Interacts with MAVS/IPS1. Interacts (via protein kinase domain) with TTLL12 (via N-terminus); the interaction prevents MAVS binding to IKBKE. Interacts with the adapter proteins AZI2/NAP1, TANK and TBKBP1/SINTBAD. Interacts with SIKE1. Interacts with TICAM1/TRIF, IRF3 and RIGI; interactions are disrupted by the interaction between IKBKE and SIKE1. Interacts with TOPORS; induced by DNA damage. Interacts with CYLD. Interacts (when polyubiquitinated) with IKBKB, IKBKG and MYD88. Interacts with IFIH1. Interacts with DDX3X; the interaction may be induced upon virus infection. Interacts with TRIM6 (via SPRY box). Interacts with unanchored K48-linked polyubiquitin chains; this leads to IKBKE activation. Interacts with TBK1. Interacts with FKBP5. In terms of assembly, (Microbial infection) Interacts (via Protein kinase domain) with arenavirus protein N; the interaction inhibits IKBKE kinase function. (Microbial infection) Interacts with Ebola virus protein VP35; the interaction leads to inhibition of cellular antiviral response by blocking necessary interactions between the IKBKE and MAVS/IPS as well as its substrates IRF3 and IRF7. As to quaternary structure, (Microbial infection) Interacts with Severe fever with thrombocytopenia virus (SFTSV) NSs; this interaction this interaction sequesters IKBKE in NSs-induced cytoplasmic inclusion bodies thereby inhibiting the IFN responses. In terms of assembly, (Microbial infection) Interacts with human T-cell leukemia virus 1/HTLV-1 protein HBZ. (Microbial infection) Interacts with Epstein-Barr virus (EBV) protein NEC2/BFRF1; this interaction inhibits IKBKE kinase activity and IRF3 nuclear translocation. In terms of processing, autophosphorylated and phosphorylated by IKBKB/IKKB. Phosphorylation at Ser-172 is enhanced by the interaction with DDX3X. Phosphorylated at Thr-501 upon IFN activation. Post-translationally, sumoylation by TOPORS upon DNA damage is required for protection of cells against DNA damage-induced cell death. Desumoylated by SENP1. 'Lys-63'-linked polyubiquitinated at Lys-30 and Lys-401 by TRAF2:BIRC2 and TRAF2:BIRC3 complexes. Ubiquitination is induced by LPS, TNFA and interleukin-1 and required for full kinase activity and KF-kappa-B pathway activation. In terms of tissue distribution, highly expressed in spleen followed by thymus, peripheral blood leukocytes, pancreas, placenta. Weakly expressed in lung, kidney, prostate, ovary and colon.

It localises to the cytoplasm. The protein resides in the nucleus. The protein localises to the PML body. The catalysed reaction is L-seryl-[I-kappa-B protein] + ATP = O-phospho-L-seryl-[I-kappa-B protein] + ADP + H(+). Functionally, serine/threonine kinase that plays an essential role in regulating inflammatory responses to viral infection, through the activation of the type I IFN, NF-kappa-B and STAT signaling. Also involved in TNFA and inflammatory cytokines, like Interleukin-1, signaling. Following activation of viral RNA sensors, such as RIG-I-like receptors, associates with DDX3X and phosphorylates interferon regulatory factors (IRFs), IRF3 and IRF7, as well as DDX3X. This activity allows subsequent homodimerization and nuclear translocation of the IRF3 leading to transcriptional activation of pro-inflammatory and antiviral genes including IFNB. In order to establish such an antiviral state, IKBKE forms several different complexes whose composition depends on the type of cell and cellular stimuli. Thus, several scaffolding molecules including IPS1/MAVS, TANK, AZI2/NAP1 or TBKBP1/SINTBAD can be recruited to the IKBKE-containing-complexes. Activated by polyubiquitination in response to TNFA and interleukin-1, regulates the NF-kappa-B signaling pathway through, at least, the phosphorylation of CYLD. Phosphorylates inhibitors of NF-kappa-B thus leading to the dissociation of the inhibitor/NF-kappa-B complex and ultimately the degradation of the inhibitor. In addition, is also required for the induction of a subset of ISGs which displays antiviral activity, may be through the phosphorylation of STAT1 at 'Ser-708'. Phosphorylation of STAT1 at 'Ser-708' also seems to promote the assembly and DNA binding of ISGF3 (STAT1:STAT2:IRF9) complexes compared to GAF (STAT1:STAT1) complexes, in this way regulating the balance between type I and type II IFN responses. Protects cells against DNA damage-induced cell death. Also plays an important role in energy balance regulation by sustaining a state of chronic, low-grade inflammation in obesity, wich leads to a negative impact on insulin sensitivity. Phosphorylates AKT1. The protein is Inhibitor of nuclear factor kappa-B kinase subunit epsilon (IKBKE) of Homo sapiens (Human).